A 381-amino-acid polypeptide reads, in one-letter code: Cytochrome b (381 aa).

4 consecutive transmembrane segments (helical) span residues 33–53 (FGSLLGICLVIQILTGLFLAM), 77–98 (WLIRNLHANGASMFFMCLFLHV), 113–133 (WNIGVILLLTVMATAFVGYVL), and 178–198 (FFAFHFILPFIIMALVIVHLL). Heme b is bound by residues His-83 and His-97. Heme b contacts are provided by His-182 and His-196. Residue His-201 participates in a ubiquinone binding. 4 consecutive transmembrane segments (helical) span residues 226–246 (IKDALGLMFLLLVLLTLALFS), 288–308 (LGGVLALLASILILLIIPLLH), 320–340 (VSQTLFWILTANLITLTWIGG), and 347–367 (FIIIGQSASILLSMLILVLMP).

This sequence belongs to the cytochrome b family. As to quaternary structure, the cytochrome bc1 complex contains 11 subunits: 3 respiratory subunits (MT-CYB, CYC1 and UQCRFS1), 2 core proteins (UQCRC1 and UQCRC2) and 6 low-molecular weight proteins (UQCRH/QCR6, UQCRB/QCR7, UQCRQ/QCR8, UQCR10/QCR9, UQCR11/QCR10 and a cleavage product of UQCRFS1). This cytochrome bc1 complex then forms a dimer. It depends on heme b as a cofactor.

It localises to the mitochondrion inner membrane. Its function is as follows. Component of the ubiquinol-cytochrome c reductase complex (complex III or cytochrome b-c1 complex) that is part of the mitochondrial respiratory chain. The b-c1 complex mediates electron transfer from ubiquinol to cytochrome c. Contributes to the generation of a proton gradient across the mitochondrial membrane that is then used for ATP synthesis. This Ningaui yvonnae (Southern ningaui) protein is Cytochrome b (MT-CYB).